Here is a 313-residue protein sequence, read N- to C-terminus: D-alanine--D-alanine ligase (313 aa).

Positions 108–308 (KLVWQQTGVP…YSELVVKVLS (201 aa)) constitute an ATP-grasp domain. 138 to 193 (VAKLGLPLFVKPASEGSSVAVLKVKTADALPAALEEAATHDKIVIVEKSIEGGGEY) provides a ligand contact to ATP. Mg(2+)-binding residues include aspartate 262, glutamate 275, and asparagine 277.

The protein belongs to the D-alanine--D-alanine ligase family. It depends on Mg(2+) as a cofactor. The cofactor is Mn(2+).

It is found in the cytoplasm. The catalysed reaction is 2 D-alanine + ATP = D-alanyl-D-alanine + ADP + phosphate + H(+). The protein operates within cell wall biogenesis; peptidoglycan biosynthesis. In terms of biological role, cell wall formation. The chain is D-alanine--D-alanine ligase from Burkholderia cenocepacia (strain ATCC BAA-245 / DSM 16553 / LMG 16656 / NCTC 13227 / J2315 / CF5610) (Burkholderia cepacia (strain J2315)).